The following is a 304-amino-acid chain: Glutaminase (304 aa).

Residues S63, N114, E158, N165, Y189, Y240, and V258 each coordinate substrate.

The protein belongs to the glutaminase family. Homotetramer.

It catalyses the reaction L-glutamine + H2O = L-glutamate + NH4(+). This Shewanella baltica (strain OS155 / ATCC BAA-1091) protein is Glutaminase.